A 1088-amino-acid chain; its full sequence is DNA polymerase delta catalytic subunit (1088 aa).

The protein belongs to the DNA polymerase type-B family. As to quaternary structure, heterodimer with subunits of 125 kDa and 50 kDa. The 125 kDa subunit contains the polymerase active site and most likely the active site for the 3'-5' exonuclease activity.

It localises to the nucleus. The enzyme catalyses DNA(n) + a 2'-deoxyribonucleoside 5'-triphosphate = DNA(n+1) + diphosphate. Functionally, this polymerase possesses two enzymatic activities: DNA synthesis (polymerase) and an exonucleolytic activity that degrades single-stranded DNA in the 3'- to 5'-direction. This is DNA polymerase delta catalytic subunit (POLD1) from Glycine max (Soybean).